Consider the following 166-residue polypeptide: Cytochrome c-type biogenesis protein CcmE (166 aa).

Residues 1 to 8 (MNAVRRKK) lie on the Cytoplasmic side of the membrane. A helical; Signal-anchor for type II membrane protein membrane pass occupies residues 9–29 (LMWVMFTLAGAVIAVALVIYA). Residues 30-166 (IGKQTDYYFD…KLHETKTLQQ (137 aa)) lie on the Periplasmic side of the membrane. Heme contacts are provided by His124 and Tyr128. The disordered stretch occupies residues 133–166 (VAKSMKENNRSGAVPSSEQYNPAEKLHETKTLQQ). The span at 142-152 (RSGAVPSSEQY) shows a compositional bias: polar residues. Over residues 156 to 166 (EKLHETKTLQQ) the composition is skewed to basic and acidic residues.

The protein belongs to the CcmE/CycJ family.

The protein resides in the cell inner membrane. Its function is as follows. Heme chaperone required for the biogenesis of c-type cytochromes. Transiently binds heme delivered by CcmC and transfers the heme to apo-cytochromes in a process facilitated by CcmF and CcmH. The protein is Cytochrome c-type biogenesis protein CcmE of Psychrobacter arcticus (strain DSM 17307 / VKM B-2377 / 273-4).